Here is a 141-residue protein sequence, read N- to C-terminus: Methane monooxygenase regulatory protein B (141 aa).

This sequence belongs to the TmoD/XamoD family. The soluble methane monooxygenase (sMMO) consists of four components A/MMOH (composed of alpha/MmoX, beta/MmoY and gamma/MmoZ), B/MMOB (MmoB), C/MMOR (MmoC) and D/MMOD (MmoD).

In terms of biological role, the B protein acts as a regulator of electron flow through the soluble mmo complex, switching the enzyme from an oxidase to a hydroxylase in the presence of the substrate. In Methylococcus capsulatus (strain ATCC 33009 / NCIMB 11132 / Bath), this protein is Methane monooxygenase regulatory protein B (mmoB).